Here is a 139-residue protein sequence, read N- to C-terminus: Asp-hemolysin (139 aa).

Residues 1–5 (MASVQ) constitute a propeptide that is removed on maturation. The tract at residues 47 to 79 (TSEDVQQKTAPPGGSVNVNSCGRSDASSGTTGG) is disordered. Residues 62-75 (VNVNSCGRSDASSG) are compositionally biased toward polar residues.

The protein belongs to the aegerolysin family.

This chain is Asp-hemolysin, found in Aspergillus fumigatus (strain ATCC MYA-4609 / CBS 101355 / FGSC A1100 / Af293) (Neosartorya fumigata).